Here is a 271-residue protein sequence, read N- to C-terminus: 3-methyl-2-oxobutanoate hydroxymethyltransferase (271 aa).

The Mg(2+) site is built by D51 and D90. 3-methyl-2-oxobutanoate is bound by residues 51-52, D90, and K119; that span reads DS. Residue E121 participates in Mg(2+) binding. Residue E188 is the Proton acceptor of the active site.

Belongs to the PanB family. Homodecamer; pentamer of dimers. Mg(2+) is required as a cofactor.

The protein resides in the cytoplasm. The catalysed reaction is 3-methyl-2-oxobutanoate + (6R)-5,10-methylene-5,6,7,8-tetrahydrofolate + H2O = 2-dehydropantoate + (6S)-5,6,7,8-tetrahydrofolate. It functions in the pathway cofactor biosynthesis; (R)-pantothenate biosynthesis; (R)-pantoate from 3-methyl-2-oxobutanoate: step 1/2. In terms of biological role, catalyzes the reversible reaction in which hydroxymethyl group from 5,10-methylenetetrahydrofolate is transferred onto alpha-ketoisovalerate to form ketopantoate. This chain is 3-methyl-2-oxobutanoate hydroxymethyltransferase, found in Azoarcus sp. (strain BH72).